Reading from the N-terminus, the 180-residue chain is Ribosome maturation factor RimM (180 aa).

A PRC barrel domain is found at 97–169 (PGELSWDFFV…IITVDLPEGL (73 aa)).

Belongs to the RimM family. Binds ribosomal protein uS19.

The protein localises to the cytoplasm. Functionally, an accessory protein needed during the final step in the assembly of 30S ribosomal subunit, possibly for assembly of the head region. Essential for efficient processing of 16S rRNA. May be needed both before and after RbfA during the maturation of 16S rRNA. It has affinity for free ribosomal 30S subunits but not for 70S ribosomes. This chain is Ribosome maturation factor RimM, found in Bacteroides fragilis (strain YCH46).